The chain runs to 364 residues: MMLERTTAAIGPLDEQAMATAADLQSRLTKPAGSLGVLEELSVRLAGLAGVCPPPLPEPAAVAVFAGDHGVHAQGVTPWPQEVTGQMIGNFLAGGAVVNAFARQTGATVTVVDVGVAAPPTSIETAPPESATASGARPRLVEANIRRGTRDLTVTAALTRDEARAAVETGIRVADELVDAGAAILLTGDMGIGNTTPAAALIAVFAEADPATVTGRGTGVDDPTHQRKIEVVRAALRRHEPDPADPLGVLAAVGGLEHAALAGLILGAAAQRVPVLLDGVIADSAALAAAAFAPSATGAMVAGHRSVEPGATVALRRLGLTPLVDLGLRLGEGTGALLALPVVAGAVRVLHEVATFDSAGVAQK.

E332 acts as the Proton acceptor in catalysis.

Belongs to the CobT family.

It carries out the reaction 5,6-dimethylbenzimidazole + nicotinate beta-D-ribonucleotide = alpha-ribazole 5'-phosphate + nicotinate + H(+). It participates in nucleoside biosynthesis; alpha-ribazole biosynthesis; alpha-ribazole from 5,6-dimethylbenzimidazole: step 1/2. Catalyzes the synthesis of alpha-ribazole-5'-phosphate from nicotinate mononucleotide (NAMN) and 5,6-dimethylbenzimidazole (DMB). This chain is Nicotinate-nucleotide--dimethylbenzimidazole phosphoribosyltransferase, found in Salinispora tropica (strain ATCC BAA-916 / DSM 44818 / JCM 13857 / NBRC 105044 / CNB-440).